A 301-amino-acid polypeptide reads, in one-letter code: GTPase Era (301 aa).

The region spanning 7 to 175 (YCGFIAIVGR…AAIVRKHLPE (169 aa)) is the Era-type G domain. Positions 15–22 (GRPNVGKS) are G1. GTP is bound at residue 15–22 (GRPNVGKS). The G2 stretch occupies residues 41-45 (QTTRH). The interval 62–65 (DTPG) is G3. Residues 62–66 (DTPGL) and 124–127 (NKVD) contribute to the GTP site. Positions 124–127 (NKVD) are G4. The tract at residues 154 to 156 (ISA) is G5. Positions 206–283 (LGAELPYSVT…HLELWVKVKS (78 aa)) constitute a KH type-2 domain.

This sequence belongs to the TRAFAC class TrmE-Era-EngA-EngB-Septin-like GTPase superfamily. Era GTPase family. As to quaternary structure, monomer.

Its subcellular location is the cytoplasm. The protein resides in the cell inner membrane. An essential GTPase that binds both GDP and GTP, with rapid nucleotide exchange. Plays a role in 16S rRNA processing and 30S ribosomal subunit biogenesis and possibly also in cell cycle regulation and energy metabolism. In Cronobacter sakazakii (strain ATCC BAA-894) (Enterobacter sakazakii), this protein is GTPase Era.